The following is an 83-amino-acid chain: Exodeoxyribonuclease 7 small subunit (83 aa).

This sequence belongs to the XseB family. As to quaternary structure, heterooligomer composed of large and small subunits.

It is found in the cytoplasm. The enzyme catalyses Exonucleolytic cleavage in either 5'- to 3'- or 3'- to 5'-direction to yield nucleoside 5'-phosphates.. In terms of biological role, bidirectionally degrades single-stranded DNA into large acid-insoluble oligonucleotides, which are then degraded further into small acid-soluble oligonucleotides. The protein is Exodeoxyribonuclease 7 small subunit of Rhizobium leguminosarum bv. trifolii (strain WSM2304).